A 566-amino-acid polypeptide reads, in one-letter code: Arginine--tRNA ligase (566 aa).

Positions 121–131 (PNIAKPMSMGH) match the 'HIGH' region motif.

It belongs to the class-I aminoacyl-tRNA synthetase family. In terms of assembly, monomer.

The protein resides in the cytoplasm. It catalyses the reaction tRNA(Arg) + L-arginine + ATP = L-arginyl-tRNA(Arg) + AMP + diphosphate. This is Arginine--tRNA ligase from Oenococcus oeni (strain ATCC BAA-331 / PSU-1).